Here is a 205-residue protein sequence, read N- to C-terminus: High frequency lysogenization protein HflD homolog (205 aa).

This sequence belongs to the HflD family.

It localises to the cytoplasm. Its subcellular location is the cell inner membrane. This chain is High frequency lysogenization protein HflD homolog, found in Haemophilus influenzae (strain ATCC 51907 / DSM 11121 / KW20 / Rd).